Reading from the N-terminus, the 200-residue chain is Protein GrpE (200 aa).

Residues 1 to 27 show a composition bias toward basic and acidic residues; that stretch reads MTKQEKAENQEKPTEETVEETPKKETP. Residues 1–50 form a disordered region; that stretch reads MTKQEKAENQEKPTEETVEETPKKETPFEPVMEADEVEETTEAQAPVEEA. Positions 32 to 41 are enriched in acidic residues; sequence MEADEVEETT.

Belongs to the GrpE family. As to quaternary structure, homodimer.

It is found in the cytoplasm. In terms of biological role, participates actively in the response to hyperosmotic and heat shock by preventing the aggregation of stress-denatured proteins, in association with DnaK and GrpE. It is the nucleotide exchange factor for DnaK and may function as a thermosensor. Unfolded proteins bind initially to DnaJ; upon interaction with the DnaJ-bound protein, DnaK hydrolyzes its bound ATP, resulting in the formation of a stable complex. GrpE releases ADP from DnaK; ATP binding to DnaK triggers the release of the substrate protein, thus completing the reaction cycle. Several rounds of ATP-dependent interactions between DnaJ, DnaK and GrpE are required for fully efficient folding. The protein is Protein GrpE of Latilactobacillus sakei subsp. sakei (strain 23K) (Lactobacillus sakei subsp. sakei).